Here is an 836-residue protein sequence, read N- to C-terminus: Spliceosome associated factor 3, U4/U6 recycling protein (836 aa).

HAT repeat units follow at residues 127-163 (EDFKFCRDVCSKALENLGTRYDSGGHIWLIFLEYEMS), 296-329 (KLPQVAVKVYSRALRHCPYSFVLHQQALLAFERD), 331-367 (RPNEEIDALWERARSNVINSAEEGRSLYRTYAFLLRR), 418-451 (KNMDKCRNIWNDILASGFGRFAGKWIEAVRLERQ), and 453-486 (GDKENARKYLNKALNSVSDNINEIYMYYVQFERE). Positions 507–585 (RAIRPQKKVS…APGSFAVQKA (79 aa)) are disordered. The span at 540–550 (IVKKVKGDDGG) shows a compositional bias: basic and acidic residues. Over residues 558–579 (SNAKSSSAVSSSNASSTPAPGS) the composition is skewed to low complexity. 2 consecutive RRM domains span residues 593–668 (RTIF…ANDP) and 683–760 (SKVF…LSNP). Disordered stretches follow at residues 757-786 (LSNPPVKKDKSHGKPAAIGASLEEDGPRKG) and 811-830 (AMDVSEGTSTSQPLSNDQFR). Polar residues predominate over residues 816–827 (EGTSTSQPLSND).

As to quaternary structure, forms a complex composed of sart-3, terminal uridylyltransferase usip-1 and U6 snRNA; complex formation is mediated by usip-1 and sart-3 binding to U6 snRNA. Associates with U4 and U6 snRNP complexes, probably by interacting with U4 and U6 snRNAs. Ubiquitously expressed.

It localises to the nucleus. The protein resides in the nucleoplasm. U6 snRNP-binding protein that functions as a recycling factor of the splicing machinery. Promotes the initial reassembly of U4 and U6 snRNPs following their ejection from the spliceosome during its maturation. This chain is Spliceosome associated factor 3, U4/U6 recycling protein, found in Caenorhabditis elegans.